The sequence spans 544 residues: Membrane protein insertase YidC (544 aa).

The next 5 membrane-spanning stretches (helical) occupy residues 6–26, 343–363, 418–438, 456–476, and 497–517; these read NLLL…WETD, KFLH…TFIV, LGGC…YYML, LSAQ…MFFI, and PVIF…YYIV.

This sequence belongs to the OXA1/ALB3/YidC family. Type 1 subfamily. As to quaternary structure, interacts with the Sec translocase complex via SecD. Specifically interacts with transmembrane segments of nascent integral membrane proteins during membrane integration.

It localises to the cell inner membrane. In terms of biological role, required for the insertion and/or proper folding and/or complex formation of integral membrane proteins into the membrane. Involved in integration of membrane proteins that insert both dependently and independently of the Sec translocase complex, as well as at least some lipoproteins. Aids folding of multispanning membrane proteins. This Pectobacterium atrosepticum (strain SCRI 1043 / ATCC BAA-672) (Erwinia carotovora subsp. atroseptica) protein is Membrane protein insertase YidC.